The following is a 129-amino-acid chain: D-ribose pyranase (129 aa).

Residue His-20 is the Proton donor of the active site. Residues Asp-28, His-96, and 118-120 each bind substrate; that span reads YAN.

Belongs to the RbsD / FucU family. RbsD subfamily. In terms of assembly, homodecamer.

The protein resides in the cytoplasm. It carries out the reaction beta-D-ribopyranose = beta-D-ribofuranose. It participates in carbohydrate metabolism; D-ribose degradation; D-ribose 5-phosphate from beta-D-ribopyranose: step 1/2. Functionally, catalyzes the interconversion of beta-pyran and beta-furan forms of D-ribose. This chain is D-ribose pyranase, found in Halalkalibacterium halodurans (strain ATCC BAA-125 / DSM 18197 / FERM 7344 / JCM 9153 / C-125) (Bacillus halodurans).